Consider the following 371-residue polypeptide: Queuine tRNA-ribosyltransferase (371 aa).

D90 acts as the Nucleophile in catalysis. D90 serves as the catalytic Proton acceptor. Substrate contacts are provided by residues 90 to 94 (DSGGF), S91, D144, Q189, and G215. The RNA binding stretch occupies residues 246-252 (GVGTPEN). D265 acts as the Nucleophile in catalysis. Residues 270–274 (TRNAR) form an RNA binding; important for wobble base 34 recognition region. Zn(2+) contacts are provided by C303, C305, C308, and H334.

It belongs to the queuine tRNA-ribosyltransferase family. As to quaternary structure, homodimer. Within each dimer, one monomer is responsible for RNA recognition and catalysis, while the other monomer binds to the replacement base PreQ1. Zn(2+) is required as a cofactor.

It catalyses the reaction 7-aminomethyl-7-carbaguanine + guanosine(34) in tRNA = 7-aminomethyl-7-carbaguanosine(34) in tRNA + guanine. The protein operates within tRNA modification; tRNA-queuosine biosynthesis. In terms of biological role, catalyzes the base-exchange of a guanine (G) residue with the queuine precursor 7-aminomethyl-7-deazaguanine (PreQ1) at position 34 (anticodon wobble position) in tRNAs with GU(N) anticodons (tRNA-Asp, -Asn, -His and -Tyr). Catalysis occurs through a double-displacement mechanism. The nucleophile active site attacks the C1' of nucleotide 34 to detach the guanine base from the RNA, forming a covalent enzyme-RNA intermediate. The proton acceptor active site deprotonates the incoming PreQ1, allowing a nucleophilic attack on the C1' of the ribose to form the product. After dissociation, two additional enzymatic reactions on the tRNA convert PreQ1 to queuine (Q), resulting in the hypermodified nucleoside queuosine (7-(((4,5-cis-dihydroxy-2-cyclopenten-1-yl)amino)methyl)-7-deazaguanosine). This is Queuine tRNA-ribosyltransferase from Helicobacter pylori (strain ATCC 700392 / 26695) (Campylobacter pylori).